The sequence spans 782 residues: Structure-specific endonuclease subunit SLX4 (782 aa).

Disordered regions lie at residues Thr63 to Met91 and Lys359 to Lys425. A compositionally biased stretch (basic residues) spans Gly73 to Lys84. A compositionally biased stretch (polar residues) spans Pro374–Asp388.

Belongs to the SLX4 family. Forms a heterodimer with SLX1. Post-translationally, phosphorylated in response to DNA damage.

The protein resides in the nucleus. Functionally, regulatory subunit of the SLX1-SLX4 structure-specific endonuclease that resolves DNA secondary structures generated during DNA repair and recombination. Has endonuclease activity towards branched DNA substrates, introducing single-strand cuts in duplex DNA close to junctions with ss-DNA. This is Structure-specific endonuclease subunit SLX4 from Scheffersomyces stipitis (strain ATCC 58785 / CBS 6054 / NBRC 10063 / NRRL Y-11545) (Yeast).